Here is a 650-residue protein sequence, read N- to C-terminus: MGNGVASFSGCCAGTTAGEISGRYVTGVGLVQENLGHSFCYVRPVLTGSKSSFPPEPPLRPDPIPGTTTTFRSISGASVSANTSTALSTSLSTDTSGIASAFESSNRFASLPLQPVPRSPIKKSDHGSGLFERRFLSGPIESGLVSGKKTKEKAKLKKSGSKSFTKPKLKKSESKIFTFKNVFTNLSCSKKSVIKPINGFDSFDGSSDTDRYIPEINSLSTIVSSHEKPRIKEEEDKTESALEEPKIQWAQGKAGEDRVHVILSEENGWLFVGIYDGFSGPDPPDYLIKNLYTAVLRELKGLLWIDKGESYNRNGESNIEKQSTVEHASDSDQENCPVMNGNDVACGSRNITSDVKKLQWRCEWEHNSSNKSNNINHKDVLRALQQALEKTEESFDLMVNENPELALMGSCVLVTLMKGEDVYVMSVGDSRAVLARRPNVEKMKMQKELERVKEESPLETLFITERGLSLLVPVQLNKEHSTSVEEEVRRIKKEHPDDILAIENNRVKGYLKVTRAFGAGFLKQPKWNEALLEMFRIDYVGTSPYITCSPSLHHHRLSSRDKFLILSSDGLYEYFSNEEAIFEVDSFISAFPEGDPAQHLIQEVLLRAAKKYGMDFHELLEIPQGDRRRYHDDVSVIVISLEGRIWRSSM.

Residues 146–166 (SGKKTKEKAKLKKSGSKSFTK) are disordered. The span at 148–166 (KKTKEKAKLKKSGSKSFTK) shows a compositional bias: basic residues. Positions 239–641 (ESALEEPKIQ…DDVSVIVISL (403 aa)) constitute a PPM-type phosphatase domain. Mn(2+) contacts are provided by D276, G277, D569, and D632.

The protein belongs to the PP2C family. Mg(2+) is required as a cofactor. It depends on Mn(2+) as a cofactor.

The protein localises to the nucleus. The enzyme catalyses O-phospho-L-seryl-[protein] + H2O = L-seryl-[protein] + phosphate. It catalyses the reaction O-phospho-L-threonyl-[protein] + H2O = L-threonyl-[protein] + phosphate. This Arabidopsis thaliana (Mouse-ear cress) protein is Probable protein phosphatase 2C 36 (PLL3).